The following is a 170-amino-acid chain: MQIITAEDYRLYGGLKRPELESGVEVMITAANALITSLLGMDDADAVDQLITTKPTRKKYFLSSPSATSVTKMTINDKEIDPEQYKLYSDGVILLKFNPPEGYMDVEYTQGGFNPMPEDLKLAACMLVDHWHKQDYRQARTIGGETVTFNNTKSGIPEHIRTIIEVYRRV.

Its subcellular location is the virion. Its function is as follows. Head completion protein that closes the capsid once the viral DNA has been packaged. Probably part of the head-tail connector by binding to the portal protein and to the tail completion protein. This chain is Head completion protein, found in Escherichia coli (Enterobacteria phage T5).